The sequence spans 406 residues: Ascaroside receptor GPR2 (406 aa).

At 1–29 (MTQLPYLLDRRGGALAAPATAWGDMMLNR) the chain is on the extracellular side. The helical transmembrane segment at 30–50 (ALFSVALLSSVGSAWVVLSYA) threads the bilayer. Over 51 to 61 (CIKELRSYRHQ) the chain is Cytoplasmic. Residues 62 to 82 (LILGLAISDLLMSLNFMFSAG) form a helical membrane-spanning segment. Residues 83–107 (WNVAGGDLALEESRTACSVNGFLTQ) are Extracellular-facing. The cysteines at positions 99 and 173 are disulfide-linked. Residues 108 to 128 (VFVVQTDWWILVIAIATYIIL) form a helical membrane-spanning segment. The Cytoplasmic portion of the chain corresponds to 129–143 (GNFKTQSQFIQTHVW). The chain crosses the membrane as a helical span at residues 144–164 (IPWVGPWVLSIIIAAICHGVL). Residues 165-185 (GYGYIGGWCWLTSDLMRLLIN) are Extracellular-facing. The chain crosses the membrane as a helical span at residues 186–206 (FIPRWLIVIAIALIYIRLYMI). Topologically, residues 207–326 (VRKARKWDIE…AAQLKRIAKK (120 aa)) are cytoplasmic. Residues 327–347 (MMVYPVAYAIIWACPTAIRIY) traverse the membrane as a helical segment. The Extracellular segment spans residues 348 to 356 (QGTTGSRAP). Residues 357–377 (LWITIVDKSCIVIQGLVDAVV) form a helical membrane-spanning segment. The Cytoplasmic segment spans residues 378-406 (YGLNERAWQGWRDHIRRIIYKNEGGRIIG).

The protein belongs to the G-protein coupled receptor 1 family. As to quaternary structure, interacts with ascaroside receptor GPR3; may form a functional heterodimer. Interacts with guanine nucleotide-binding protein alpha GPA2; to activate adenylate cyclase and positively regulate nematode trap formation.

The protein localises to the cell membrane. Its function is as follows. G protein-coupled receptor that senses nematode ascaroside pheromones and signals via adenylate cyclase to positively regulate trap formation for nematode capture. In Arthrobotrys oligospora (strain ATCC 24927 / CBS 115.81 / DSM 1491) (Nematode-trapping fungus), this protein is Ascaroside receptor GPR2.